Consider the following 262-residue polypeptide: Mlc titration factor A (262 aa).

Residues His111, His148, His152, and Glu211 each coordinate Zn(2+).

The protein belongs to the MtfA family. In terms of assembly, interacts with Mlc. The cofactor is Zn(2+).

The protein resides in the cytoplasm. Involved in the modulation of the activity of the glucose-phosphotransferase system (glucose-PTS). Interacts with the transcriptional repressor Mlc, preventing its interaction with DNA and leading to the modulation of expression of genes regulated by Mlc, including ptsG, which encodes the PTS system glucose-specific EIICB component. Functionally, shows zinc-dependent metallopeptidase activity. The protein is Mlc titration factor A of Serratia proteamaculans (strain 568).